We begin with the raw amino-acid sequence, 84 residues long: Small ribosomal subunit protein bS16 (84 aa).

Belongs to the bacterial ribosomal protein bS16 family.

This is Small ribosomal subunit protein bS16 from Burkholderia multivorans (strain ATCC 17616 / 249).